Consider the following 460-residue polypeptide: Bifunctional protein GlmU (460 aa).

The interval M1–R230 is pyrophosphorylase. UDP-N-acetyl-alpha-D-glucosamine-binding positions include L9–G12, K23, Q73, and G78–T79. D103 serves as a coordination point for Mg(2+). G140, E155, N170, and N228 together coordinate UDP-N-acetyl-alpha-D-glucosamine. Residue N228 coordinates Mg(2+). Residues V231–N251 are linker. An N-acetyltransferase region spans residues G252–K460. Residues R333 and K351 each contribute to the UDP-N-acetyl-alpha-D-glucosamine site. H363 (proton acceptor) is an active-site residue. UDP-N-acetyl-alpha-D-glucosamine contacts are provided by Y366 and N377. Acetyl-CoA is bound by residues A380, N386–Y387, S405, A423, and R440.

In the N-terminal section; belongs to the N-acetylglucosamine-1-phosphate uridyltransferase family. The protein in the C-terminal section; belongs to the transferase hexapeptide repeat family. As to quaternary structure, homotrimer. It depends on Mg(2+) as a cofactor.

The protein resides in the cytoplasm. The catalysed reaction is alpha-D-glucosamine 1-phosphate + acetyl-CoA = N-acetyl-alpha-D-glucosamine 1-phosphate + CoA + H(+). It carries out the reaction N-acetyl-alpha-D-glucosamine 1-phosphate + UTP + H(+) = UDP-N-acetyl-alpha-D-glucosamine + diphosphate. It participates in nucleotide-sugar biosynthesis; UDP-N-acetyl-alpha-D-glucosamine biosynthesis; N-acetyl-alpha-D-glucosamine 1-phosphate from alpha-D-glucosamine 6-phosphate (route II): step 2/2. It functions in the pathway nucleotide-sugar biosynthesis; UDP-N-acetyl-alpha-D-glucosamine biosynthesis; UDP-N-acetyl-alpha-D-glucosamine from N-acetyl-alpha-D-glucosamine 1-phosphate: step 1/1. The protein operates within bacterial outer membrane biogenesis; LPS lipid A biosynthesis. Functionally, catalyzes the last two sequential reactions in the de novo biosynthetic pathway for UDP-N-acetylglucosamine (UDP-GlcNAc). The C-terminal domain catalyzes the transfer of acetyl group from acetyl coenzyme A to glucosamine-1-phosphate (GlcN-1-P) to produce N-acetylglucosamine-1-phosphate (GlcNAc-1-P), which is converted into UDP-GlcNAc by the transfer of uridine 5-monophosphate (from uridine 5-triphosphate), a reaction catalyzed by the N-terminal domain. The sequence is that of Bifunctional protein GlmU from Streptococcus suis (strain 98HAH33).